The sequence spans 155 residues: SsrA-binding protein (155 aa).

The protein belongs to the SmpB family.

Its subcellular location is the cytoplasm. Required for rescue of stalled ribosomes mediated by trans-translation. Binds to transfer-messenger RNA (tmRNA), required for stable association of tmRNA with ribosomes. tmRNA and SmpB together mimic tRNA shape, replacing the anticodon stem-loop with SmpB. tmRNA is encoded by the ssrA gene; the 2 termini fold to resemble tRNA(Ala) and it encodes a 'tag peptide', a short internal open reading frame. During trans-translation Ala-aminoacylated tmRNA acts like a tRNA, entering the A-site of stalled ribosomes, displacing the stalled mRNA. The ribosome then switches to translate the ORF on the tmRNA; the nascent peptide is terminated with the 'tag peptide' encoded by the tmRNA and targeted for degradation. The ribosome is freed to recommence translation, which seems to be the essential function of trans-translation. The polypeptide is SsrA-binding protein (Streptococcus equi subsp. zooepidemicus (strain MGCS10565)).